Reading from the N-terminus, the 976-residue chain is Protein PLASTID MOVEMENT IMPAIRED 1-RELATED 2 (976 aa).

Positions 81–229 constitute a C2 NT-type domain; sequence IAHFGQRRFD…VLNLSFDYSV (149 aa). The segment covering 309–319 has biased composition (basic and acidic residues); it reads KQAADSDDSGK. Disordered stretches follow at residues 309–343 and 381–419; these read KQAA…ESSR and NLLP…STEK. Residues 394-414 are compositionally biased toward low complexity; that stretch reads STFSSQVISESSESKSPSAMD.

Seems not necessary for chloroplast and nuclear photorelocation movements. The protein is Protein PLASTID MOVEMENT IMPAIRED 1-RELATED 2 of Arabidopsis thaliana (Mouse-ear cress).